Consider the following 236-residue polypeptide: Snake venom serine protease pallase (236 aa).

Residues 1-227 (VIGGDECNIN…HLDWIENIIA (227 aa)) form the Peptidase S1 domain. 6 disulfides stabilise this stretch: cysteine 7-cysteine 139, cysteine 26-cysteine 42, cysteine 74-cysteine 234, cysteine 118-cysteine 188, cysteine 150-cysteine 167, and cysteine 178-cysteine 203. Active-site charge relay system residues include histidine 41 and aspartate 86. The active-site Charge relay system is the serine 182.

The protein belongs to the peptidase S1 family. Snake venom subfamily. Monomer. As to expression, expressed by the venom gland.

The protein resides in the secreted. Snake venom serine protease that may act in the hemostasis system of the prey. This Gloydius halys (Chinese water mocassin) protein is Snake venom serine protease pallase.